Consider the following 346-residue polypeptide: Tyrosine--tRNA ligase (346 aa).

The short motif at 47-56 is the 'HIGH' region element; it reads PSGRIHIAQA. The 'KMSKS' region signature appears at 230–234; sequence KMSKS. ATP is bound at residue Lys233.

This sequence belongs to the class-I aminoacyl-tRNA synthetase family. In terms of assembly, homodimer.

It catalyses the reaction tRNA(Tyr) + L-tyrosine + ATP = L-tyrosyl-tRNA(Tyr) + AMP + diphosphate + H(+). Functionally, catalyzes the attachment of tyrosine to tRNA(Tyr) in a two-step reaction: tyrosine is first activated by ATP to form Tyr-AMP and then transferred to the acceptor end of tRNA(Tyr). The sequence is that of Tyrosine--tRNA ligase (YARS) from Acanthamoeba polyphaga (Amoeba).